Consider the following 195-residue polypeptide: Pyruvoyl-dependent arginine decarboxylase AaxB (195 aa).

Residue serine 53 is modified to Pyruvic acid (Ser).

The protein belongs to the pyruvoyl-dependent arginine decarboxylase family. As to quaternary structure, trimer of an alpha-beta dimer. Pyruvate is required as a cofactor.

The protein resides in the cytoplasm. It carries out the reaction L-arginine + H(+) = agmatine + CO2. With respect to regulation, inhibited by argininamide. In terms of biological role, part of the AaxABC system, catalyzes the decarboxylation of L-arginine. The arginine uptake by the bacterium in the macrophage may be a virulence factor against the host innate immune response. In Chlamydia pneumoniae (Chlamydophila pneumoniae), this protein is Pyruvoyl-dependent arginine decarboxylase AaxB (aaxB).